The sequence spans 43 residues: Parvalbumin beta (43 aa).

2 EF-hand domains span residues 1–20 (KVFE…LKLF) and 22–43 (LSSA…ALVK). Ca(2+) is bound by residues Asp-7, Asp-9, Ser-11, Phe-12, Glu-14, Glu-16, and Glu-37.

Detected in muscle and cutaneous mucus. In the skin, detected in cells in the basal region of the glandular epithelium of the dermal mucus glands (at protein level).

The protein localises to the cytoplasm. It localises to the secreted. In terms of biological role, in muscle, parvalbumin is thought to be involved in relaxation after contraction. It binds two calcium ions. This chain is Parvalbumin beta, found in Rana temporaria (European common frog).